A 200-amino-acid polypeptide reads, in one-letter code: Segregation and condensation protein B (200 aa).

It belongs to the ScpB family. As to quaternary structure, homodimer. Homodimerization may be required to stabilize the binding of ScpA to the Smc head domains. Component of a cohesin-like complex composed of ScpA, ScpB and the Smc homodimer, in which ScpA and ScpB bind to the head domain of Smc. The presence of the three proteins is required for the association of the complex with DNA.

It is found in the cytoplasm. Functionally, participates in chromosomal partition during cell division. May act via the formation of a condensin-like complex containing Smc and ScpA that pull DNA away from mid-cell into both cell halves. This is Segregation and condensation protein B from Lactobacillus delbrueckii subsp. bulgaricus (strain ATCC 11842 / DSM 20081 / BCRC 10696 / JCM 1002 / NBRC 13953 / NCIMB 11778 / NCTC 12712 / WDCM 00102 / Lb 14).